A 1367-amino-acid polypeptide reads, in one-letter code: Histone acetyltransferase HAC2 (1367 aa).

Residues 110–151 are disordered; sequence TSSIPGSSGSASETNSGSDITKQDFKNDSPSDSKKVQGSSTS. The span at 111–127 shows a compositional bias: low complexity; the sequence is SSIPGSSGSASETNSGS. A compositionally biased stretch (basic and acidic residues) spans 130–144; it reads TKQDFKNDSPSDSKK. 12 consecutive repeat copies span residues 188–200, 223–235, 251–263, 286–298, 314–326, 349–361, 377–389, 418–430, 432–444, 459–471, 473–485, and 500–512. The segment at 188 to 512 is 12 X 13 AA approximate repeats; it reads KLGTVVDIVE…IGVDIVEPMK (325 aa). The segment at 688 to 765 adopts a PHD-type zinc-finger fold; it reads HQICSPCHSR…EYICPTCLLE (78 aa). One can recognise a CBP/p300-type HAT domain in the interval 780-1213; that stretch reads DSGAKDLPET…ILHHLHTSNK (434 aa). Residues 903 to 905, 922 to 923, and tryptophan 978 contribute to the acetyl-CoA site; these read LDS and RT. The segment at 1094–1157 adopts a ZZ-type 1; degenerate zinc-finger fold; sequence ELNYSCTRCS…QLSKVQVNGV (64 aa). Residues cysteine 1099, cysteine 1102, cysteine 1123, cysteine 1126, cysteine 1225, cysteine 1228, cysteine 1240, cysteine 1243, cysteine 1249, cysteine 1252, histidine 1261, and histidine 1263 each coordinate Zn(2+). Residues 1220–1273 form a ZZ-type 2 zinc finger; the sequence is SSSLTCTACKKDVSTTIYFPCLLCPDYRACTGCYTKNRTLRHLHIFPTLPSANR. Residues 1274–1359 form a TAZ-type zinc finger; the sequence is APSRTVMVLE…NCPVPQCRDR (86 aa).

Rosette leaves, stems and flowers.

Its subcellular location is the nucleus. The enzyme catalyses L-lysyl-[protein] + acetyl-CoA = N(6)-acetyl-L-lysyl-[protein] + CoA + H(+). Its function is as follows. Acetyltransferase enzyme. Acetylates histones, giving a specific tag for transcriptional activation. No acetyltransferase activity found in vitro. The chain is Histone acetyltransferase HAC2 (HAC2) from Arabidopsis thaliana (Mouse-ear cress).